A 308-amino-acid chain; its full sequence is Putative protein TIC 214 N-terminal part (308 aa).

The next 6 helical transmembrane spans lie at 18–38, 64–84, 87–107, 124–144, 172–192, and 215–235; these read IINS…FSIG, FITG…HLAL, PHTI…WNNH, LSIQ…HFIL, VGWL…LSWI, and IFSI…PSPI. The span at 239–249 shows a compositional bias: basic and acidic residues; that stretch reads KLKETSEMEER. The disordered stretch occupies residues 239-308; the sequence is KLKETSEMEE…RDPSEWKGNI (70 aa). Acidic residues predominate over residues 250-262; sequence GESEEETDVEIET. The span at 264–273 shows a compositional bias: basic and acidic residues; it reads SETKETKQEQ. Acidic residues predominate over residues 275–293; it reads GSTEEDPSLCSEEQEDPDK. Residues 294–308 are compositionally biased toward basic and acidic residues; sequence LDETGRDPSEWKGNI.

Belongs to the TIC214 family. As to quaternary structure, part of the Tic complex.

Its subcellular location is the plastid. The protein resides in the chloroplast inner membrane. Its function is as follows. Involved in protein precursor import into chloroplasts. May be part of an intermediate translocation complex acting as a protein-conducting channel at the inner envelope. The protein is Putative protein TIC 214 N-terminal part of Piper cenocladum (Ant piper).